We begin with the raw amino-acid sequence, 247 residues long: Vacuolar iron transporter 1 (247 aa).

Topologically, residues 1–33 (MVIAGVSPPTPSSENLLQEHEEKHFTATDVVRD) are cytoplasmic. Residues 34–54 (VIIGVSDGLTVPFALAAGLSG) traverse the membrane as a helical segment. The Vacuolar segment spans residues 55-60 (ANVPSS). Residues 61-81 (LILTAGIAEVAAGAISMGLGG) traverse the membrane as a helical segment. Residues 82 to 167 (YLAAKSEEDH…PRRALESAMT (86 aa)) are Cytoplasmic-facing. Fe cation-binding residues include Glu99, Glu102, Glu110, Glu113, Met146, and Glu150. A helical transmembrane segment spans residues 168–188 (IALAYVVGGLVPLSPYFFIPF). The Vacuolar segment spans residues 189 to 191 (AKQ). Residues 192–212 (AMITSIAVTLLALVVFGYIKG) traverse the membrane as a helical segment. At 213–219 (RFTGSNP) the chain is on the cytoplasmic side. Residues 220 to 240 (VLSSIQTAIIGALASAAAYAM) traverse the membrane as a helical segment. The Vacuolar portion of the chain corresponds to 241–247 (AKAVQSV).

This sequence belongs to the CCC1 family. As to expression, expressed at high levels in the blue epidermal cells of the inner bottom part of the petal (at protein level). No detectable expression in parenchyma and epidermis of the purple segments of the petal, parenchyma of the blue segments, leaf, stem, bulb and root (at protein level). High levels of mRNA in the blue epidermal cells of the inner bottom part of the petal. Low-levels of mRNA in the purple segments of the petal, stem, leaf, root, bulb and pistil.

The protein resides in the vacuole membrane. It carries out the reaction Fe(2+)(in) = Fe(2+)(out). Functionally, vacuolar iron transporter involved in the transfer of iron ions from the cytosol to the vacuole for intracellular iron storage. Plays an essential role in the development of blue coloration in tulip petals most likely due to the accumulation of ferrous ions that can form complexes with anthocyanins. The polypeptide is Vacuolar iron transporter 1 (Tulipa gesneriana (Garden tulip)).